Consider the following 329-residue polypeptide: GTPase Obg (329 aa).

Residues methionine 1–leucine 159 form the Obg domain. The region spanning alanine 160 to glycine 328 is the OBG-type G domain. ATP is bound by residues glycine 166 to serine 173, phenylalanine 191 to valine 195, aspartate 213 to glycine 216, asparagine 280 to glutamate 283, and serine 309 to valine 311. 2 residues coordinate Mg(2+): serine 173 and threonine 193.

This sequence belongs to the TRAFAC class OBG-HflX-like GTPase superfamily. OBG GTPase family. Monomer. Mg(2+) is required as a cofactor.

It localises to the cytoplasm. In terms of biological role, an essential GTPase which binds GTP, GDP and possibly (p)ppGpp with moderate affinity, with high nucleotide exchange rates and a fairly low GTP hydrolysis rate. Plays a role in control of the cell cycle, stress response, ribosome biogenesis and in those bacteria that undergo differentiation, in morphogenesis control. This is GTPase Obg from Synechococcus sp. (strain WH7803).